The chain runs to 156 residues: ATP synthase subunit b (156 aa).

The chain crosses the membrane as a helical span at residues 7 to 27 (IFFQMLVFFVLGWFTMKFVWP).

The protein belongs to the ATPase B chain family. As to quaternary structure, F-type ATPases have 2 components, F(1) - the catalytic core - and F(0) - the membrane proton channel. F(1) has five subunits: alpha(3), beta(3), gamma(1), delta(1), epsilon(1). F(0) has three main subunits: a(1), b(2) and c(10-14). The alpha and beta chains form an alternating ring which encloses part of the gamma chain. F(1) is attached to F(0) by a central stalk formed by the gamma and epsilon chains, while a peripheral stalk is formed by the delta and b chains.

Its subcellular location is the cell inner membrane. F(1)F(0) ATP synthase produces ATP from ADP in the presence of a proton or sodium gradient. F-type ATPases consist of two structural domains, F(1) containing the extramembraneous catalytic core and F(0) containing the membrane proton channel, linked together by a central stalk and a peripheral stalk. During catalysis, ATP synthesis in the catalytic domain of F(1) is coupled via a rotary mechanism of the central stalk subunits to proton translocation. In terms of biological role, component of the F(0) channel, it forms part of the peripheral stalk, linking F(1) to F(0). This chain is ATP synthase subunit b, found in Bordetella pertussis (strain Tohama I / ATCC BAA-589 / NCTC 13251).